The following is a 228-amino-acid chain: Putative adhesin RBE_1271 (228 aa).

The signal sequence occupies residues 1-22; it reads MKKLLLIAATSATVLSSALSFA.

The protein is Putative adhesin RBE_1271 of Rickettsia bellii (strain RML369-C).